The sequence spans 217 residues: Ribonuclease HII (217 aa).

The RNase H type-2 domain maps to Lys-25–Arg-215. The a divalent metal cation site is built by Asp-31, Glu-32, and Asp-123.

It belongs to the RNase HII family. Mn(2+) is required as a cofactor. It depends on Mg(2+) as a cofactor.

It localises to the cytoplasm. It catalyses the reaction Endonucleolytic cleavage to 5'-phosphomonoester.. Endonuclease that specifically degrades the RNA of RNA-DNA hybrids. The protein is Ribonuclease HII of Blochmanniella pennsylvanica (strain BPEN).